A 1191-amino-acid polypeptide reads, in one-letter code: WASH complex subunit homolog 5 (1191 aa).

The protein belongs to the strumpellin family. Component of the WASH complex.

The protein localises to the early endosome. In terms of biological role, acts at least in part as component of the WASH complex which may regulate wash nucleation-promoting factor (NPF) activity and is required for its membrane targeting during endosomal sorting. During embryogenesis, not involved in the wash-dependent developmental migration of hemocytes anteriorly from the tail. In Drosophila melanogaster (Fruit fly), this protein is WASH complex subunit homolog 5.